The primary structure comprises 123 residues: Small ribosomal subunit protein uS12 (123 aa).

The disordered stretch occupies residues 1–31 (MPTIQQLVRKGRHSKKAKVATAGLKGSPQRR). Residues 9–18 (RKGRHSKKAK) are compositionally biased toward basic residues. The residue at position 89 (D89) is a 3-methylthioaspartic acid.

This sequence belongs to the universal ribosomal protein uS12 family. Part of the 30S ribosomal subunit. Contacts proteins S8 and S17. May interact with IF1 in the 30S initiation complex.

Functionally, with S4 and S5 plays an important role in translational accuracy. Its function is as follows. Interacts with and stabilizes bases of the 16S rRNA that are involved in tRNA selection in the A site and with the mRNA backbone. Located at the interface of the 30S and 50S subunits, it traverses the body of the 30S subunit contacting proteins on the other side and probably holding the rRNA structure together. The combined cluster of proteins S8, S12 and S17 appears to hold together the shoulder and platform of the 30S subunit. In Corynebacterium aurimucosum (strain ATCC 700975 / DSM 44827 / CIP 107346 / CN-1) (Corynebacterium nigricans), this protein is Small ribosomal subunit protein uS12.